Here is a 715-residue protein sequence, read N- to C-terminus: ATP-dependent DNA helicase Hel308 (715 aa).

The short motif at 8–36 (MPIEDLKLPSNVIEIIKKRGIKKLNPPQT) is the Q motif element. Residues Gln-35 and 53 to 60 (SPTGSGKT) contribute to the ATP site. The region spanning 40–203 (KKGLLEGNRL…WLGAEPVATN (164 aa)) is the Helicase ATP-binding domain. The DEAH box signature appears at 152–155 (DELH). One can recognise a Helicase C-terminal domain in the interval 236 to 442 (HGDDAIIAYT…ERAFYTFLLG (207 aa)).

The protein belongs to the helicase family. Hel308 subfamily. As to quaternary structure, monomer.

The enzyme catalyses Couples ATP hydrolysis with the unwinding of duplex DNA by translocating in the 3'-5' direction.. The catalysed reaction is ATP + H2O = ADP + phosphate + H(+). DNA-dependent ATPase and 3'-5' DNA helicase that may be involved in repair of stalled replication forks. A low processivity 3'-5' helicase. Unwinds short dsDNA substrates with 3'-overhangs (25 bp dsDNA with 25 base overhang), less active on longer dsDNA substrates. Also unwinds the lagging strand of a stalled replication fork (but the leading strand was not tested). Binds ssDNA, but dsDNA about 35-fold less well. Able to displace streptavidin from biotinylated ssDNA, which is partially inhibited by DNA-binding proteins, suggesting it may play a role in stripping proteins from stalled replication forks. This chain is ATP-dependent DNA helicase Hel308, found in Saccharolobus solfataricus (strain 98/2) (Sulfolobus solfataricus).